An 868-amino-acid chain; its full sequence is MRQVCCSALPPPLEKARCSSYSYSDSSSSSSSNNSSSSTSSRSSSRSSSRSSRGSTTTTSSSENSGSNSGSIFRPAAPPEPRPQPQPQPRSPAARRAAARSRAAAAGGMRRDPAPGSSMLLFGVSLACYSPSLKSVQDQAYKAPVVVEGKVQGLAPAGGSSSNSTREPPASGRVALVKVLDKWPLRSGGLQREQVISVGSCAPLERNQRYIFFLEPTEQPLVFKTAFAPVDPNGKNIKKEVGKILCTDCATRPKLKKMKSQTGEVGEKQSLKCEAAAGNPQPSYRWFKDGKELNRSRDIRIKYGNGRKNSRLQFNKVKVEDAGEYVCEAENILGKDTVRGRLHVNSVSTTLSSWSGHARKCNETAKSYCVNGGVCYYIEGINQLSCKCPNGFFGQRCLEKLPLRLYMPDPKQKHLGFELKEAEELYQKRVLTITGICVALLVVGIVCVVAYCKTKKQRRQMHHHLRQNMCPAHQNRSLANGPSHPRLDPEEIQMADYISKNVPATDHVIRREAETTFSGSHSCSPSHHCSTATPTSSHRHESHTWSLERSESLTSDSQSGIMLSSVGTSKCNSPACVEARARRAAAYSQEERRRAAMPPYHDSIDSLRDSPHSERYVSALTTPARLSPVDFHYSLATQVPTFEITSPNSAHAVSLPPAAPISYRLAEQQPLLRHPAPPGPGPGPGADMQRSYDSYYYPAAGPGPRRGACALGGSLGSLPASPFRIPEDDEYETTQECAPPPPPRPRTRGASRRTSAGPRRWRRSRLNGLAAQRARAARDSLSLSSGSGCGSASASDDDADDADGALAAESTPFLGLRAAHDALRSDSPPLCPAADSRTYYSLDSHSTRASSRHSRGPPTRAKQDSGPL.

The disordered stretch occupies residues 1–114; it reads MRQVCCSALP…AAGGMRRDPA (114 aa). Positions 1–127 are excised as a propeptide; it reads MRQVCCSALP…SMLLFGVSLA (127 aa). A compositionally biased stretch (low complexity) spans 19–75; the sequence is SSYSYSDSSSSSSSNNSSSSTSSRSSSRSSSRSSRGSTTTTSSSENSGSNSGSIFRP. Asn-33 and Asn-34 each carry an N-linked (GlcNAc...) asparagine glycan. The segment covering 76-90 has biased composition (pro residues); it reads AAPPEPRPQPQPQPR. The segment covering 91-108 has biased composition (low complexity); that stretch reads SPAARRAAARSRAAAAGG. The Extracellular portion of the chain corresponds to 128–429; the sequence is CYSPSLKSVQ…KEAEELYQKR (302 aa). N-linked (GlcNAc...) asparagine glycans are attached at residues Asn-163, Asn-294, and Asn-362. Positions 253 to 348 constitute an Ig-like C2-type domain; sequence PKLKKMKSQT…RGRLHVNSVS (96 aa). 4 disulfide bridges follow: Cys-273/Cys-327, Cys-361/Cys-375, Cys-369/Cys-386, and Cys-388/Cys-397. In terms of domain architecture, EGF-like spans 357–398; that stretch reads HARKCNETAKSYCVNGGVCYYIEGINQLSCKCPNGFFGQRCL. The helical transmembrane segment at 430–450 threads the bilayer; sequence VLTITGICVALLVVGIVCVVA. Over 451-868 the chain is Cytoplasmic; it reads YCKTKKQRRQ…TRAKQDSGPL (418 aa). 5 disordered regions span residues 469-488, 516-553, 671-690, 720-806, and 823-868; these read MCPA…PRLD, TFSG…SESL, LLRH…DMQR, ASPF…DGAL, and LRSD…SGPL. Low complexity predominate over residues 518 to 530; sequence SGSHSCSPSHHCS. The segment covering 538-551 has biased composition (basic and acidic residues); sequence HRHESHTWSLERSE. Positions 766–794 are enriched in low complexity; that stretch reads LNGLAAQRARAARDSLSLSSGSGCGSASA.

This sequence belongs to the neuregulin family. Interacts with ERBB3 and ERBB4. In terms of processing, proteolytic cleavage close to the plasma membrane on the external face leads to the release of the soluble growth factor form. Extensive glycosylation precedes the proteolytic cleavage. Expressed in most parts of the brain, especially the olfactory bulb and cerebellum where it localizes in granule and Purkinje cells. In the hippocampus, found in the granule cells of the dentate gyrus. In the basal forebrain, found in the cholinergic cells. In the hindbrain, weakly detectable in the motor trigeminal nucleus. Not detected in the hypothalamus. Also found in the liver and in the thymus. Not detected in heart, adrenal gland, or testis.

It localises to the cell membrane. It is found in the secreted. In terms of biological role, direct ligand for ERBB3 and ERBB4 tyrosine kinase receptors. Concomitantly recruits ERBB1 and ERBB2 coreceptors, resulting in ligand-stimulated tyrosine phosphorylation and activation of the ERBB receptors. May also promote the heterodimerization with the EGF receptor. In Rattus norvegicus (Rat), this protein is Pro-neuregulin-2, membrane-bound isoform (Nrg2).